The primary structure comprises 104 residues: ATP synthase subunit c (104 aa).

2 consecutive transmembrane segments (helical) span residues 31-51 (SMIA…IGMG) and 75-95 (MFIA…IALI).

The protein belongs to the ATPase C chain family. F-type ATPases have 2 components, F(1) - the catalytic core - and F(0) - the membrane proton channel. F(1) has five subunits: alpha(3), beta(3), gamma(1), delta(1), epsilon(1). F(0) has three main subunits: a(1), b(2) and c(10-14). The alpha and beta chains form an alternating ring which encloses part of the gamma chain. F(1) is attached to F(0) by a central stalk formed by the gamma and epsilon chains, while a peripheral stalk is formed by the delta and b chains.

It localises to the cell inner membrane. Its function is as follows. F(1)F(0) ATP synthase produces ATP from ADP in the presence of a proton or sodium gradient. F-type ATPases consist of two structural domains, F(1) containing the extramembraneous catalytic core and F(0) containing the membrane proton channel, linked together by a central stalk and a peripheral stalk. During catalysis, ATP synthesis in the catalytic domain of F(1) is coupled via a rotary mechanism of the central stalk subunits to proton translocation. Functionally, key component of the F(0) channel; it plays a direct role in translocation across the membrane. A homomeric c-ring of between 10-14 subunits forms the central stalk rotor element with the F(1) delta and epsilon subunits. This is ATP synthase subunit c from Sulfurimonas denitrificans (strain ATCC 33889 / DSM 1251) (Thiomicrospira denitrificans (strain ATCC 33889 / DSM 1251)).